The primary structure comprises 92 residues: Putative membrane protein insertion efficiency factor (92 aa).

It belongs to the UPF0161 family.

It is found in the cell membrane. Could be involved in insertion of integral membrane proteins into the membrane. This chain is Putative membrane protein insertion efficiency factor, found in Tropheryma whipplei (strain TW08/27) (Whipple's bacillus).